The chain runs to 389 residues: Dihydroorotase (389 aa).

Residues His51 and His53 each contribute to the Zn(2+) site. Residues 53 to 55 and Asn85 contribute to the substrate site; that span reads HVR. Zn(2+)-binding residues include Lys133, His158, His193, and Asp256. Lys133 is modified (N6-carboxylysine). Residue Asp256 is part of the active site. Substrate is bound by residues His260 and 274–275; that span reads PG.

The protein belongs to the metallo-dependent hydrolases superfamily. DHOase family. Class I DHOase subfamily. Zn(2+) is required as a cofactor.

The enzyme catalyses (S)-dihydroorotate + H2O = N-carbamoyl-L-aspartate + H(+). It participates in pyrimidine metabolism; UMP biosynthesis via de novo pathway; (S)-dihydroorotate from bicarbonate: step 3/3. In terms of biological role, catalyzes the reversible cyclization of carbamoyl aspartate to dihydroorotate. This Sulfolobus acidocaldarius (strain ATCC 33909 / DSM 639 / JCM 8929 / NBRC 15157 / NCIMB 11770) protein is Dihydroorotase.